A 481-amino-acid polypeptide reads, in one-letter code: Pentatricopeptide repeat-containing protein 8, mitochondrial (481 aa).

Residues 1 to 55 constitute a mitochondrion transit peptide; the sequence is MQGFGSQIFRKLLRSSNAKVSDALLQNTRTLFTAPPLHSGLQTSFTAETQQHVRQ. PPR repeat units follow at residues 137–172 and 365–399; these read SARF…EFLP and SIST…GLKP.

It is found in the mitochondrion. In terms of biological role, mitochondrial RNA-binding protein involved in mitochondrial translation. The cox1 mRNA is one target but it is not clear if ppr8 has a single or multiple targets. The protein is Pentatricopeptide repeat-containing protein 8, mitochondrial (ppr8) of Schizosaccharomyces pombe (strain 972 / ATCC 24843) (Fission yeast).